The primary structure comprises 502 residues: Ubiquitin-like-specific protease 1A (502 aa).

Active-site residues include H393, D410, and C461.

This sequence belongs to the peptidase C48 family.

Its function is as follows. Protease that catalyzes two essential functions in the SUMO pathway: processing of full-length SUMOs to their mature forms and deconjugation of SUMO from targeted proteins. Cleaves precursors of SUM1 and SUM2, and very inefficiently of SUM3. Seems to be the only ULP1 able to cleave SUM3 precursors. Cleaves SUMO peptides better than SUMO-conjugated proteins. The chain is Ubiquitin-like-specific protease 1A (ULP1A) from Arabidopsis thaliana (Mouse-ear cress).